The chain runs to 453 residues: Presenilin-like protein At1g08700 (453 aa).

Over 1 to 8 (MESSILDS) the chain is Cytoplasmic. Residues 9–29 (LGVEIIGVMAPVSICMFLVVL) form a helical membrane-spanning segment. Topologically, residues 30-68 (LTYSLSVTSDPQIRSAANLIYIENPSDSTTVKLEGSLAN) are lumenal. The helical transmembrane segment at 69-89 (AIVFVVLIAAVTFILVLLFYY) threads the bilayer. Residues 90-103 (NFTNFLKHYMRFSA) lie on the Cytoplasmic side of the membrane. Residues 104 to 124 (FFVLGTMGGAIFLSIIQHFSI) traverse the membrane as a helical segment. The Lumenal portion of the chain corresponds to 125 to 132 (PVDSITCF). Residues 133-153 (ILLFNFTILGTLSVFAGGIPI) form a helical membrane-spanning segment. Topologically, residues 154 to 159 (VLRQCY) are cytoplasmic. A run of 2 helical transmembrane segments spans residues 160–180 (MVVMGIVVAAWFTKLPEWTTW) and 181–201 (FILVALALYDLVAVLAPGGPL). The active site involves Asp190. The Cytoplasmic segment spans residues 202–369 (KLLVELASSR…VVDISNRGIK (168 aa)). 2 disordered regions span residues 226–248 (VSSGNQRRNRGSSLRALVGGGGV) and 292–329 (IGNGSRGGLERSPLVGSPSASEHSTSVGTRGNMEDRES). Residues 227–240 (SSGNQRRNRGSSLR) are compositionally biased toward low complexity. Ser296 bears the Phosphoserine mark. Polar residues predominate over residues 309–320 (PSASEHSTSVGT). Residues 370–390 (LGLGDFIFYSVLVGRAAMYDL) form a helical membrane-spanning segment. The active site involves Asp374. Residues 391 to 392 (MT) lie on the Lumenal side of the membrane. Residues 393-413 (VYACYLAIISGLGCTLILLSV) form a helical membrane-spanning segment. The Cytoplasmic segment spans residues 414–417 (YNRA). The segment at residues 418-438 (LPALPISIMLGVVFYFLTRLL) is an intramembrane region (helical). A PAL motif is present at residues 419 to 421 (PAL). Topologically, residues 439–453 (MEPFVVGVTTNLMMF) are cytoplasmic.

Belongs to the peptidase A22A family. In terms of assembly, homodimer. Probable component of the gamma-secretase complex, a complex composed of a presenilin homodimer, nicastrin, APH1 and PEN2.

Its subcellular location is the endoplasmic reticulum membrane. It is found in the golgi apparatus membrane. Functionally, probable subunit of the gamma-secretase complex, an endoprotease complex that catalyzes the intramembrane cleavage of integral membrane proteins such as Notch receptors. This Arabidopsis thaliana (Mouse-ear cress) protein is Presenilin-like protein At1g08700.